The chain runs to 92 residues: uncharacterized protein (92 aa).

Residues 24–89 (KQIVLKVKEM…AIHKLKYTAE (66 aa)) form the HMA domain. Positions 35 and 38 each coordinate a metal cation.

This is an uncharacterized protein from Haemophilus influenzae (strain ATCC 51907 / DSM 11121 / KW20 / Rd).